We begin with the raw amino-acid sequence, 122 residues long: Large ribosomal subunit protein uL18 (122 aa).

A disordered region spans residues 1 to 27; the sequence is MATLSKKQQTQKRHKRLRRHLNGTNHR. A compositionally biased stretch (basic residues) spans 9–27; sequence QTQKRHKRLRRHLNGTNHR.

It belongs to the universal ribosomal protein uL18 family. As to quaternary structure, part of the 50S ribosomal subunit; part of the 5S rRNA/L5/L18/L25 subcomplex. Contacts the 5S and 23S rRNAs.

In terms of biological role, this is one of the proteins that bind and probably mediate the attachment of the 5S RNA into the large ribosomal subunit, where it forms part of the central protuberance. This chain is Large ribosomal subunit protein uL18, found in Prochlorococcus marinus (strain MIT 9211).